The primary structure comprises 77 residues: Acyl carrier protein (77 aa).

The Carrier domain maps to 3–77; the sequence is QEIFEKVKKI…GKAVEHIESK (75 aa). At S38 the chain carries O-(pantetheine 4'-phosphoryl)serine.

This sequence belongs to the acyl carrier protein (ACP) family. In terms of processing, 4'-phosphopantetheine is transferred from CoA to a specific serine of apo-ACP by AcpS. This modification is essential for activity because fatty acids are bound in thioester linkage to the sulfhydryl of the prosthetic group.

The protein localises to the cytoplasm. It participates in lipid metabolism; fatty acid biosynthesis. In terms of biological role, carrier of the growing fatty acid chain in fatty acid biosynthesis. The sequence is that of Acyl carrier protein from Synechocystis sp. (strain ATCC 27184 / PCC 6803 / Kazusa).